Reading from the N-terminus, the 78-residue chain is DGESIYINGTAPTCSSCHDRGVAGAPELNAPEDWADRPSSVDELVESTLAGKGAMPAYDGRADREDLVKAIEYMLSTL.

Cys-14, Cys-17, His-18, and Met-55 together coordinate heme c.

In terms of processing, binds 1 heme c group covalently per subunit.

In Halorhodospira halophila (Ectothiorhodospira halophila), this protein is Cytochrome c-551.